The sequence spans 444 residues: Glutamate--tRNA ligase (444 aa).

The 'HIGH' region motif lies at 12–22 (PSPTGFLHVGG). The 'KMSKS' region signature appears at 213 to 217 (KMSKR). Lys-216 serves as a coordination point for ATP.

This sequence belongs to the class-I aminoacyl-tRNA synthetase family. Glutamate--tRNA ligase type 1 subfamily. In terms of assembly, monomer.

Its subcellular location is the cytoplasm. The enzyme catalyses tRNA(Glu) + L-glutamate + ATP = L-glutamyl-tRNA(Glu) + AMP + diphosphate. Catalyzes the attachment of glutamate to tRNA(Glu) in a two-step reaction: glutamate is first activated by ATP to form Glu-AMP and then transferred to the acceptor end of tRNA(Glu). This Methylacidiphilum infernorum (isolate V4) (Methylokorus infernorum (strain V4)) protein is Glutamate--tRNA ligase.